The sequence spans 242 residues: UPF0246 protein SSA_1395 (242 aa).

It belongs to the UPF0246 family.

This is UPF0246 protein SSA_1395 from Streptococcus sanguinis (strain SK36).